Here is a 285-residue protein sequence, read N- to C-terminus: Bifunctional protein FolD (285 aa).

Position 166–168 (166–168) interacts with NADP(+); it reads GAS.

It belongs to the tetrahydrofolate dehydrogenase/cyclohydrolase family. Homodimer.

The catalysed reaction is (6R)-5,10-methylene-5,6,7,8-tetrahydrofolate + NADP(+) = (6R)-5,10-methenyltetrahydrofolate + NADPH. The enzyme catalyses (6R)-5,10-methenyltetrahydrofolate + H2O = (6R)-10-formyltetrahydrofolate + H(+). It functions in the pathway one-carbon metabolism; tetrahydrofolate interconversion. Functionally, catalyzes the oxidation of 5,10-methylenetetrahydrofolate to 5,10-methenyltetrahydrofolate and then the hydrolysis of 5,10-methenyltetrahydrofolate to 10-formyltetrahydrofolate. The sequence is that of Bifunctional protein FolD from Thioalkalivibrio sulfidiphilus (strain HL-EbGR7).